Here is a 381-residue protein sequence, read N- to C-terminus: Endolytic peptidoglycan transglycosylase RlpA (381 aa).

The signal sequence occupies residues 1 to 19; the sequence is MRKQLPVICVAAGIVLLAA. The N-palmitoyl cysteine moiety is linked to residue cysteine 20. A lipid anchor (S-diacylglycerol cysteine) is attached at cysteine 20. Residues 196–274 are disordered; the sequence is LPPRPDLSGG…QPAPVSAPVA (79 aa). A compositionally biased stretch (low complexity) spans 208–218; sequence SASSAPAQPQG. The SPOR domain occupies 304–380; the sequence is AAASGRFVVQ…AQLQSFIASA (77 aa).

Belongs to the RlpA family.

Its subcellular location is the cell membrane. In terms of biological role, lytic transglycosylase with a strong preference for naked glycan strands that lack stem peptides. The polypeptide is Endolytic peptidoglycan transglycosylase RlpA (Salmonella typhimurium (strain LT2 / SGSC1412 / ATCC 700720)).